A 155-amino-acid polypeptide reads, in one-letter code: Ribosome maturation factor RimP (155 aa).

The protein belongs to the RimP family.

It is found in the cytoplasm. Its function is as follows. Required for maturation of 30S ribosomal subunits. This Prochlorococcus marinus (strain MIT 9301) protein is Ribosome maturation factor RimP.